A 393-amino-acid polypeptide reads, in one-letter code: NAD(P)H-quinone oxidoreductase subunit H, chloroplastic (393 aa).

This sequence belongs to the complex I 49 kDa subunit family. As to quaternary structure, NDH is composed of at least 16 different subunits, 5 of which are encoded in the nucleus.

It is found in the plastid. Its subcellular location is the chloroplast thylakoid membrane. It catalyses the reaction a plastoquinone + NADH + (n+1) H(+)(in) = a plastoquinol + NAD(+) + n H(+)(out). The enzyme catalyses a plastoquinone + NADPH + (n+1) H(+)(in) = a plastoquinol + NADP(+) + n H(+)(out). Functionally, NDH shuttles electrons from NAD(P)H:plastoquinone, via FMN and iron-sulfur (Fe-S) centers, to quinones in the photosynthetic chain and possibly in a chloroplast respiratory chain. The immediate electron acceptor for the enzyme in this species is believed to be plastoquinone. Couples the redox reaction to proton translocation, and thus conserves the redox energy in a proton gradient. The polypeptide is NAD(P)H-quinone oxidoreductase subunit H, chloroplastic (Spinacia oleracea (Spinach)).